Here is a 934-residue protein sequence, read N- to C-terminus: Complement component C6 (934 aa).

An N-terminal signal peptide occupies residues 1–21 (MTRHLTLCFILLIILIDKSEA). Cystine bridges form between Cys-22-Cys-61, Cys-24-Cys-65, Cys-35-Cys-73, Cys-39-Cys-78, Cys-82-Cys-117, Cys-93-Cys-127, Cys-96-Cys-133, Cys-140-Cys-151, Cys-146-Cys-164, Cys-158-Cys-173, and Cys-180-Cys-218. TSP type-1 domains lie at 22-79 (CFCD…ETCP) and 81-134 (NCVL…ELCK). Residues Trp-29 and Trp-32 are each glycosylated (C-linked (Man) tryptophan). An O-linked (Fuc...) serine glycan is attached at Ser-38. A C-linked (Man) tryptophan glycan is attached at Trp-90. In terms of domain architecture, LDL-receptor class A spans 138-175 (TDCKNKFLCDSGRCIPSKLKCNGENDCGDNSDERNCGR). Residues Leu-156, Asn-159, Glu-161, Asp-163, Asp-169, and Glu-170 each contribute to the Ca(2+) site. Positions 176-522 (TKPVCSRTYT…EYAAKFDPCQ (347 aa)) constitute an MACPF domain. A beta stranded transmembrane segment spans residues 278 to 290 (SFYVPIFYSSKKS). N-linked (GlcNAc...) asparagine glycosylation is present at Asn-324. Thr-392 carries an O-linked (Fuc...) threonine glycan. Intrachain disulfides connect Cys-399–Cys-420, Cys-499–Cys-623, Cys-521–Cys-570, Cys-523–Cys-539, Cys-526–Cys-541, Cys-543–Cys-552, Cys-577–Cys-611, Cys-589–Cys-601, Cys-644–Cys-686, Cys-672–Cys-699, Cys-704–Cys-746, Cys-732–Cys-761, Cys-773–Cys-823, Cys-784–Cys-801, Cys-786–Cys-837, Cys-793–Cys-816, Cys-862–Cys-873, Cys-867–Cys-919, Cys-880–Cys-897, Cys-882–Cys-932, and Cys-888–Cys-912. Residues 402–415 (YETKKRFLFFTKTY) form a beta stranded membrane-spanning segment. The 31-residue stretch at 523-553 (CAPCPNNGRPRLSGTECLCVCQSGTYGENCE) folds into the EGF-like domain. In terms of domain architecture, TSP type-1 3 spans 565 to 612 (DGNWGCWSSWSACNAAYRRSRSRECNNPEPQRGGQRCEGKHWQEEDCT). C-linked (Man) tryptophan glycans are attached at residues Trp-568, Trp-571, and Trp-574. CCP stretches follow at residues 611–688 (CTFS…RCLP) and 689–765 (DRTW…EKDI). Sushi domains are found at residues 642–701 (SGCP…ECQR) and 702–763 (TECL…SCEK). The segment at 642–934 (SGCPQPPLPE…EILNPGRCLD (293 aa)) is C5B-binding domain. Factor I module (FIM) regions lie at residues 766 to 840 (LTKS…CQEG) and 858 to 934 (KRVP…RCLD). The Kazal-like 1 domain maps to 780–839 (SGSECVCMSPEEDCSSYSEDLCIFDEGSSQYFTSSACKFLAEKCLNSNQFHFVHAGSCQE). Positions 876-934 (HTSNCVCLLPPQCPKDENQLHCVKMGSSMRGKTVNICTLGAVRCANRKVEILNPGRCLD) constitute a Kazal-like 2 domain.

It belongs to the complement C6/C7/C8/C9 family. As to quaternary structure, component of the membrane attack complex (MAC), composed of complement C5b, C6, C7, C8A, C8B, C8G and multiple copies of the pore-forming subunit C9. All cysteine residues are assumed to be cross-linked to one another. Individual modules containing an even number of conserved cysteine residues are supposed to have disulfide linkages only within the same module.

The protein localises to the secreted. The protein resides in the target cell membrane. Its activity is regulated as follows. Membrane attack complex (MAC) assembly is inhibited by CD59, thereby protecting self-cells from damage during complement activation. MAC assembly is also inhibited by clusterin (CLU) chaperones that inhibit polymerization of C9. Functionally, component of the membrane attack complex (MAC), a multiprotein complex activated by the complement cascade, which inserts into a target cell membrane and forms a pore, leading to target cell membrane rupture and cell lysis. The MAC is initiated by proteolytic cleavage of C5 into complement C5b in response to the classical, alternative, lectin and GZMK complement pathways. The complement pathways consist in a cascade of proteins that leads to phagocytosis and breakdown of pathogens and signaling that strengthens the adaptive immune system. Together with component C5b, involved in MAC complex assembly: complement C5b and C6 associate with the outer leaflet of target cell membrane, reducing the energy for membrane bending. The polypeptide is Complement component C6 (C6) (Rattus norvegicus (Rat)).